Consider the following 481-residue polypeptide: Glycogen synthase (481 aa).

K15 is an ADP-alpha-D-glucose binding site.

It belongs to the glycosyltransferase 1 family. Bacterial/plant glycogen synthase subfamily.

The enzyme catalyses [(1-&gt;4)-alpha-D-glucosyl](n) + ADP-alpha-D-glucose = [(1-&gt;4)-alpha-D-glucosyl](n+1) + ADP + H(+). It participates in glycan biosynthesis; glycogen biosynthesis. Synthesizes alpha-1,4-glucan chains using ADP-glucose. The sequence is that of Glycogen synthase from Thermosipho melanesiensis (strain DSM 12029 / CIP 104789 / BI429).